We begin with the raw amino-acid sequence, 212 residues long: Orotate phosphoribosyltransferase (212 aa).

Lysine 26 is a binding site for 5-phospho-alpha-D-ribose 1-diphosphate. 34-35 (FF) lines the orotate pocket. Residues 72–73 (YK), arginine 98, lysine 99, lysine 102, histidine 104, and 123–131 (DDVITAGTA) each bind 5-phospho-alpha-D-ribose 1-diphosphate. Residues threonine 127 and arginine 155 each coordinate orotate.

Belongs to the purine/pyrimidine phosphoribosyltransferase family. PyrE subfamily. As to quaternary structure, homodimer. Mg(2+) is required as a cofactor.

It carries out the reaction orotidine 5'-phosphate + diphosphate = orotate + 5-phospho-alpha-D-ribose 1-diphosphate. The protein operates within pyrimidine metabolism; UMP biosynthesis via de novo pathway; UMP from orotate: step 1/2. Functionally, catalyzes the transfer of a ribosyl phosphate group from 5-phosphoribose 1-diphosphate to orotate, leading to the formation of orotidine monophosphate (OMP). This chain is Orotate phosphoribosyltransferase, found in Marinobacter nauticus (strain ATCC 700491 / DSM 11845 / VT8) (Marinobacter aquaeolei).